We begin with the raw amino-acid sequence, 459 residues long: MYDRAPRLLKLAEGGSTEAHVGPGSYQVPFLKQQATGSNAPFLSLTARESTFTIASSIEKAVPGPGHYNVSEAQKISRSPTLTRSVDVPSIPSCGKSYGYHINDDGSIIKCFPPACDSTLGPAYYKPQFDVSNATLKYKGIHFGNSSGRQELPKKSGPGPGQYDIVQKKTSYYENVNIKRDQQQNYCSFIPRLYEIIVLQEKKKRFLPMKSITPAPGTYNEPRTALKSLKKTSGLKNIPFGQSAVRFTQDIRTEEMPGPGFYNVLNNTIIASVRNICSKKQKKSAFGSSVPRTFFSVQKEACATPGPADYQEFWHSQGVGISDELPNLTNKYAAFLSRAKRTMKVPDMVIPAPGSYDVHKSYEMSQVKHKYMPPRSLVAKRKHASFLSATPRCLEKVTDGPGPAAYNPVLRKSCPIPLFVKASKRFEESKEITPGPATYEISQEKKKGNLIGEMAADIM.

STPGR repeat units lie at residues 21–30 (VGPGSYQVPF), 63–73 (PGPGHYNVSEA), 119–148 (TLGP…NSSG), 157–203 (GPGP…QEKK), 213–243 (TPAP…FGQS), 257–268 (PGPGFYNVLNNT), 351–377 (PAPG…PRSL), 400–410 (GPGPAAYNPVL), and 433–443 (TPGPATYEISQ).

The chain is Sperm-tail PG-rich repeat-containing protein 2 (STPG2) from Homo sapiens (Human).